The chain runs to 336 residues: CMP-sialic acid transporter (336 aa).

The Cytoplasmic portion of the chain corresponds to 1–9 (MAPARENVS). Residues 10-30 (LFFKLYCLTVMTLVAAAYTVA) traverse the membrane as a helical segment. The Lumenal segment spans residues 31–45 (LRYTRTTAEELYFST). The chain crosses the membrane as a helical span at residues 46–64 (TAVCITEVIKLLISVGLLA). Lys55 lines the CMP-N-acetyl-beta-neuraminate pocket. The Cytoplasmic portion of the chain corresponds to 65–87 (KETGSLGRFKASLSENVLGSPKE). A helical membrane pass occupies residues 88–108 (LAKLSVPSLVYAVQNNMAFLA). 101-102 (QN) is a CMP-N-acetyl-beta-neuraminate binding site. The Lumenal portion of the chain corresponds to 109–114 (LSNLDA). A helical membrane pass occupies residues 115 to 135 (AVYQVTYQLKIPCTALCTVLM). 117–124 (YQVTYQLK) is a CMP-N-acetyl-beta-neuraminate binding site. The Cytoplasmic segment spans residues 136–141 (LNRTLS). Residues 142–160 (KLQWISVFMLCGGVTLVQW) form a helical membrane-spanning segment. The Lumenal portion of the chain corresponds to 161 to 175 (KPAQATKVVVAQNPL). Residues 176–196 (LGFGAIAIAVLCSGFAGVYFE) traverse the membrane as a helical segment. Position 188 (Ser188) interacts with CMP-N-acetyl-beta-neuraminate. The Cytoplasmic portion of the chain corresponds to 197–209 (KVLKSSDTSLWVR). 210-214 (NIQMY) provides a ligand contact to CMP-N-acetyl-beta-neuraminate. Residues 210–228 (NIQMYLSGIVVTLAGTYLS) form a helical membrane-spanning segment. At 229–243 (DGAEIQEKGFFYGYT) the chain is on the lumenal side. Residues 244-262 (YYVWFVIFLASVGGLYTSV) form a helical membrane-spanning segment. Residues 263-269 (VVKYTDN) lie on the Cytoplasmic side of the membrane. The chain crosses the membrane as a helical span at residues 270-288 (IMKGFSAAAAIVLSTIASV). Lys272 lines the CMP-N-acetyl-beta-neuraminate pocket. The Lumenal portion of the chain corresponds to 289–296 (LLFGLQIT). A helical membrane pass occupies residues 297–315 (LSFALGALLVCVSIYLYGL). At 316-336 (PRQDTTSIQQEATSKERIIGV) the chain is on the cytoplasmic side. Residues 316-336 (PRQDTTSIQQEATSKERIIGV) form a disordered region.

It belongs to the nucleotide-sugar transporter family. SLC35A subfamily. As to quaternary structure, monomer. In terms of tissue distribution, ubiquitous. Found in all the tissues examined including skeletal muscle, brain, heart, liver, kidney and spleen.

Its subcellular location is the golgi apparatus membrane. The catalysed reaction is CMP-N-acetyl-beta-neuraminate(in) + CMP(out) = CMP-N-acetyl-beta-neuraminate(out) + CMP(in). It carries out the reaction CMP-N-acetyl-beta-neuraminate(in) + AMP(out) = CMP-N-acetyl-beta-neuraminate(out) + AMP(in). The enzyme catalyses CDP-L-ribitol(in) + CDP(out) = CDP-L-ribitol(out) + CDP(in). It catalyses the reaction UMP(out) + CMP-N-acetyl-beta-neuraminate(in) = UMP(in) + CMP-N-acetyl-beta-neuraminate(out). Transports CMP-sialic acid from the cytosol into the Golgi apparatus, functioning as an antiporter that exchanges CMP-sialic acid for CMP. Binds both CMP-sialic acid and free CMP, but has higher affinity for free CMP. Also able to exchange CMP-sialic acid for AMP and UMP. Also mediates the transport of CDP-ribitol. The chain is CMP-sialic acid transporter from Mus musculus (Mouse).